The primary structure comprises 382 residues: Lipid-A-disaccharide synthase (382 aa).

This sequence belongs to the LpxB family.

The enzyme catalyses 2-N,3-O-bis[(3R)-3-hydroxytetradecanoyl]-alpha-D-glucosaminyl 1-phosphate + UDP-2-N,3-O-bis[(3R)-3-hydroxytetradecanoyl]-alpha-D-glucosamine = lipid A disaccharide (E. coli) + UDP + H(+). It carries out the reaction a lipid X + a UDP-2-N,3-O-bis[(3R)-3-hydroxyacyl]-alpha-D-glucosamine = a lipid A disaccharide + UDP + H(+). Its pathway is glycolipid biosynthesis; lipid IV(A) biosynthesis; lipid IV(A) from (3R)-3-hydroxytetradecanoyl-[acyl-carrier-protein] and UDP-N-acetyl-alpha-D-glucosamine: step 5/6. Condensation of UDP-2,3-diacylglucosamine and 2,3-diacylglucosamine-1-phosphate to form lipid A disaccharide, a precursor of lipid A, a phosphorylated glycolipid that anchors the lipopolysaccharide to the outer membrane of the cell. This chain is Lipid-A-disaccharide synthase, found in Shigella flexneri serotype 5b (strain 8401).